The primary structure comprises 258 residues: Tryptophan synthase alpha chain (258 aa).

Residues glutamate 46 and aspartate 57 each act as proton acceptor in the active site.

This sequence belongs to the TrpA family. In terms of assembly, tetramer of two alpha and two beta chains.

The catalysed reaction is (1S,2R)-1-C-(indol-3-yl)glycerol 3-phosphate + L-serine = D-glyceraldehyde 3-phosphate + L-tryptophan + H2O. It participates in amino-acid biosynthesis; L-tryptophan biosynthesis; L-tryptophan from chorismate: step 5/5. In terms of biological role, the alpha subunit is responsible for the aldol cleavage of indoleglycerol phosphate to indole and glyceraldehyde 3-phosphate. This Phocaeicola vulgatus (strain ATCC 8482 / DSM 1447 / JCM 5826 / CCUG 4940 / NBRC 14291 / NCTC 11154) (Bacteroides vulgatus) protein is Tryptophan synthase alpha chain.